A 205-amino-acid polypeptide reads, in one-letter code: 2-dehydro-3-deoxy-6-phosphogalactonate aldolase (205 aa).

Arg14 lines the 2-dehydro-3-deoxy-6-phospho-D-galactonate pocket. Catalysis depends on Glu37, which acts as the Proton donor/acceptor. Positions 66, 126, 156, 176, and 177 each coordinate 2-dehydro-3-deoxy-6-phospho-D-galactonate. Lys126 (schiff-base intermediate with substrate) is an active-site residue.

It belongs to the KHG/KDPG aldolase family. In terms of assembly, homotrimer.

It carries out the reaction 2-dehydro-3-deoxy-6-phospho-D-galactonate = D-glyceraldehyde 3-phosphate + pyruvate. It functions in the pathway carbohydrate acid metabolism; D-galactonate degradation; D-glyceraldehyde 3-phosphate and pyruvate from D-galactonate: step 3/3. Functionally, involved in the degradation of galactose via the DeLey-Doudoroff pathway. Catalyzes the reversible, stereospecific retro-aldol cleavage of 2-keto-3-deoxy-6-phosphogalactonate (KDPGal) to pyruvate and D-glyceraldehyde-3-phosphate. In the synthetic direction, it catalyzes the addition of pyruvate to electrophilic aldehydes with re-facial selectivity. It can use a limited number of aldehyde substrates, including D-glyceraldehyde-3-phosphate (natural substrate), D-glyceraldehyde, glycolaldehyde, 2-pyridinecarboxaldehyde, D-ribose, D-erythrose and D-threose. It efficiently catalyzes aldol addition only using pyruvate as the nucleophilic component and accepts both stereochemical configurations at C2 of the electrophile. In Escherichia coli (strain K12), this protein is 2-dehydro-3-deoxy-6-phosphogalactonate aldolase (dgoA).